Reading from the N-terminus, the 423-residue chain is Imidazolonepropionase (423 aa).

2 residues coordinate Fe(3+): H91 and H93. Zn(2+) contacts are provided by H91 and H93. 4-imidazolone-5-propanoate-binding residues include R100, Y163, and H193. Y163 serves as a coordination point for N-formimidoyl-L-glutamate. Fe(3+) is bound at residue H257. H257 provides a ligand contact to Zn(2+). Q260 contributes to the 4-imidazolone-5-propanoate binding site. D331 contacts Fe(3+). D331 is a binding site for Zn(2+). Residues N333 and G335 each coordinate N-formimidoyl-L-glutamate. T336 is a binding site for 4-imidazolone-5-propanoate.

It belongs to the metallo-dependent hydrolases superfamily. HutI family. Zn(2+) serves as cofactor. Requires Fe(3+) as cofactor.

It localises to the cytoplasm. It carries out the reaction 4-imidazolone-5-propanoate + H2O = N-formimidoyl-L-glutamate. It functions in the pathway amino-acid degradation; L-histidine degradation into L-glutamate; N-formimidoyl-L-glutamate from L-histidine: step 3/3. Its function is as follows. Catalyzes the hydrolytic cleavage of the carbon-nitrogen bond in imidazolone-5-propanoate to yield N-formimidoyl-L-glutamate. It is the third step in the universal histidine degradation pathway. This is Imidazolonepropionase from Bdellovibrio bacteriovorus (strain ATCC 15356 / DSM 50701 / NCIMB 9529 / HD100).